The primary structure comprises 310 residues: Nucleotide-binding protein Ddes_0972 (310 aa).

ATP is bound at residue Gly-30–Ser-37. Asp-82–Gln-85 is a GTP binding site.

Belongs to the RapZ-like family.

In terms of biological role, displays ATPase and GTPase activities. This is Nucleotide-binding protein Ddes_0972 from Desulfovibrio desulfuricans (strain ATCC 27774 / DSM 6949 / MB).